Reading from the N-terminus, the 179-residue chain is Large ribosomal subunit protein uL5 (179 aa).

Belongs to the universal ribosomal protein uL5 family. As to quaternary structure, part of the 50S ribosomal subunit; part of the 5S rRNA/L5/L18/L25 subcomplex. Contacts the 5S rRNA and the P site tRNA. Forms a bridge to the 30S subunit in the 70S ribosome.

In terms of biological role, this is one of the proteins that bind and probably mediate the attachment of the 5S RNA into the large ribosomal subunit, where it forms part of the central protuberance. In the 70S ribosome it contacts protein S13 of the 30S subunit (bridge B1b), connecting the 2 subunits; this bridge is implicated in subunit movement. Contacts the P site tRNA; the 5S rRNA and some of its associated proteins might help stabilize positioning of ribosome-bound tRNAs. The polypeptide is Large ribosomal subunit protein uL5 (Hamiltonella defensa subsp. Acyrthosiphon pisum (strain 5AT)).